Reading from the N-terminus, the 128-residue chain is UPF0102 protein Rfer_3873 (128 aa).

A compositionally biased stretch (polar residues) spans 1–15; it reads MAIPQIKTQVGTSKQ. Residues 1 to 20 are disordered; sequence MAIPQIKTQVGTSKQAGDAA.

Belongs to the UPF0102 family.

The protein is UPF0102 protein Rfer_3873 of Albidiferax ferrireducens (strain ATCC BAA-621 / DSM 15236 / T118) (Rhodoferax ferrireducens).